We begin with the raw amino-acid sequence, 363 residues long: MSRPQFDPSAYAAQLEDKKSRLAGLLAPFAAPAPEIFESPREHYRLRAEFRLWRETGNEKRHYAMFEQGDKHTPILIEDFPIASRRINELMPRLKAAWADPALGFKLFQVEFLTTLAGDALITLCYHRPIDDAWRQAAEKLAAELGVNLVGRSRGKRIVVGRDYVEEELSVAGRRFRYRQPEGAFTQPNGEVNQKMLGWAYEALGQRDDDLLELYCGNGNFTLPLATRVRKVLATEISKSSVNAALANLADNAVDNVSLVRLSAEELTQALNEVRPFRRLADIDLKSYAFGNVFVDPPRAGMDPDTCELTRRFERILYISCNPETLAQNIAQLHDTHRISRCALFDQFPYTHHMESGVLLERR.

S-adenosyl-L-methionine contacts are provided by Gln-187, Tyr-215, Asn-220, Glu-236, and Asp-296. The active-site Nucleophile is Cys-321. Glu-355 serves as the catalytic Proton acceptor.

It belongs to the class I-like SAM-binding methyltransferase superfamily. RNA M5U methyltransferase family. TrmA subfamily.

The catalysed reaction is uridine(54) in tRNA + S-adenosyl-L-methionine = 5-methyluridine(54) in tRNA + S-adenosyl-L-homocysteine + H(+). It catalyses the reaction uridine(341) in tmRNA + S-adenosyl-L-methionine = 5-methyluridine(341) in tmRNA + S-adenosyl-L-homocysteine + H(+). Its function is as follows. Dual-specificity methyltransferase that catalyzes the formation of 5-methyluridine at position 54 (m5U54) in all tRNAs, and that of position 341 (m5U341) in tmRNA (transfer-mRNA). This Pseudomonas aeruginosa (strain UCBPP-PA14) protein is tRNA/tmRNA (uracil-C(5))-methyltransferase.